We begin with the raw amino-acid sequence, 185 residues long: Elongation factor P (185 aa).

This sequence belongs to the elongation factor P family.

The protein localises to the cytoplasm. The protein operates within protein biosynthesis; polypeptide chain elongation. Its function is as follows. Involved in peptide bond synthesis. Stimulates efficient translation and peptide-bond synthesis on native or reconstituted 70S ribosomes in vitro. Probably functions indirectly by altering the affinity of the ribosome for aminoacyl-tRNA, thus increasing their reactivity as acceptors for peptidyl transferase. In Deinococcus radiodurans (strain ATCC 13939 / DSM 20539 / JCM 16871 / CCUG 27074 / LMG 4051 / NBRC 15346 / NCIMB 9279 / VKM B-1422 / R1), this protein is Elongation factor P.